A 475-amino-acid polypeptide reads, in one-letter code: NADH-quinone oxidoreductase subunit N 1 (475 aa).

14 helical membrane passes run 8 to 28, 36 to 56, 67 to 87, 100 to 120, 122 to 142, 157 to 177, 199 to 219, 244 to 264, 268 to 288, 295 to 315, 322 to 342, 366 to 386, 403 to 423, and 443 to 463; these read VMPL…EAAT, LFAI…PSEP, GGFF…ITLI, GEYY…SAAA, LTIL…LAGI, FLLG…IYGA, FLSG…AVPF, AAAL…LETF, PTAI…AALI, MFAY…ATGT, VLYY…IIIL, AFLM…GGFI, LAVA…RVVI, and ATIA…SLLI.

This sequence belongs to the complex I subunit 2 family. In terms of assembly, NDH-1 is composed of 14 different subunits. Subunits NuoA, H, J, K, L, M, N constitute the membrane sector of the complex.

The protein localises to the cell inner membrane. It catalyses the reaction a quinone + NADH + 5 H(+)(in) = a quinol + NAD(+) + 4 H(+)(out). NDH-1 shuttles electrons from NADH, via FMN and iron-sulfur (Fe-S) centers, to quinones in the respiratory chain. The immediate electron acceptor for the enzyme in this species is believed to be a menaquinone. Couples the redox reaction to proton translocation (for every two electrons transferred, four hydrogen ions are translocated across the cytoplasmic membrane), and thus conserves the redox energy in a proton gradient. This Chloroherpeton thalassium (strain ATCC 35110 / GB-78) protein is NADH-quinone oxidoreductase subunit N 1.